Reading from the N-terminus, the 347-residue chain is MERDFDLGMGRPGGLGGLGGEPIMQQMPQPAPHHPSRSSNDHNVKNLMKQAEENSGYLTLQGNRRKADLKELQFVEDIGHGSCGTVTKCRYKSVIMAVKTMPRTSNSYEMSRILMDLDVICLSFDCPYIVRCFGYFITNFDVRVCMECMATCLDRLLIRIKQPIPERIIGKLSVSIIKALHYLKTKHQIMHRDVKPSNILLDWSGVIKLCDFGIAGRLIESRAHSKQAGCPLYMGPERLDPNNFDSYDIRSDVWSFGVTLVELATGQYPYAGTEFDMMSKILNDEPPRLDPAKFSPDFCQLVESCLQRDPTMRPNYDMLLQHPFVVHHEKIETDVEEWFADVMGECG.

Positions 1–42 (MERDFDLGMGRPGGLGGLGGEPIMQQMPQPAPHHPSRSSNDH) are disordered. Over residues 10–20 (GRPGGLGGLGG) the composition is skewed to gly residues. The Protein kinase domain occupies 72 to 325 (LQFVEDIGHG…YDMLLQHPFV (254 aa)). ATP contacts are provided by residues 78–86 (IGHGSCGTV) and K99. Residue D193 is the Proton acceptor of the active site. Phosphoserine is present on residues S221 and S225.

The protein belongs to the protein kinase superfamily. STE Ser/Thr protein kinase family. MAP kinase kinase subfamily. In terms of assembly, interacts with shc-1; the interaction is independent of mek-1 catalytic activity, is constitutive and may facilitate mlk-1-mediated phosphorylation by bringing mlk-1 and mek-1 together. It depends on Mg(2+) as a cofactor. May be phosphorylated at Ser-221 and/or Ser-225 by mlk-1. In terms of tissue distribution, expressed in pharyngeal muscles, uterine endothelial cells, intestine and in neurons of ring ganglia, ventral ganglion and ganglia around anus. Expressed also in hypodermis and body muscles.

It catalyses the reaction L-seryl-[protein] + ATP = O-phospho-L-seryl-[protein] + ADP + H(+). The catalysed reaction is L-threonyl-[protein] + ATP = O-phospho-L-threonyl-[protein] + ADP + H(+). The enzyme catalyses L-tyrosyl-[protein] + ATP = O-phospho-L-tyrosyl-[protein] + ADP + H(+). May be activated by phosphorylation at Ser-221 and Ser-225. Functionally, dual specificity protein kinase which may phosphorylate kgb-1 and thereby is an essential component of the JNK pathway composed of mlk-1, mek-1 and kgb-1. May also have a synergistic role with sek-1 in phosphorylating pmk-1. Involved in the response to environmental stress including heavy metal ions (Cu(2+) and Cd(2+)), oxidative stress and starvation. In association with sek-1, regulates germline cell apoptosis in response to oxidative, osmotic and heat shock stresses. Involved in resistance to pathogenic bacteria infection. Involved in axon regeneration after injury. The polypeptide is Dual specificity mitogen-activated protein kinase kinase mek-1 (Caenorhabditis elegans).